A 134-amino-acid chain; its full sequence is Profilin-3 (134 aa).

Cys-13 and Cys-118 form a disulfide bridge. Positions 84–100 (AVIRGKKGSGGITSKKT) match the Involved in PIP2 interaction motif. Thr-114 carries the phosphothreonine modification.

The protein belongs to the profilin family. In terms of assembly, occurs in many kinds of cells as a complex with monomeric actin in a 1:1 ratio. Phosphorylated by MAP kinases.

It localises to the cytoplasm. Its subcellular location is the cytoskeleton. In terms of biological role, binds to actin and affects the structure of the cytoskeleton. At high concentrations, profilin prevents the polymerization of actin, whereas it enhances it at low concentrations. This is Profilin-3 from Olea europaea (Common olive).